Reading from the N-terminus, the 382-residue chain is Flap endonuclease 1-A (382 aa).

An N-domain region spans residues 1–104 (MGIHGLAKLI…GELAKRSERR (104 aa)). D34 serves as a coordination point for Mg(2+). DNA is bound by residues R47 and R70. Positions 86, 158, 160, 179, and 181 each coordinate Mg(2+). Residues 122-253 (NIEKFTKRLV…KRAIDLIRQH (132 aa)) form an I-domain region. Residue E158 coordinates DNA. DNA-binding residues include G231 and D233. A Mg(2+)-binding site is contributed by D233. An interaction with PCNA region spans residues 336 to 344 (TQGRLDDFF). The interval 350–382 (VSSTKRKEAESKGSAKKKAKTGGTPAGKFKRGK) is disordered.

The protein belongs to the XPG/RAD2 endonuclease family. FEN1 subfamily. As to quaternary structure, interacts with PCNA. Three molecules of fen1 bind to one PCNA trimer with each molecule binding to one PCNA monomer. PCNA stimulates the nuclease activity without altering cleavage specificity. The cofactor is Mg(2+). In terms of processing, phosphorylated. Phosphorylation upon DNA damage induces relocalization to the nuclear plasma.

It localises to the nucleus. The protein localises to the nucleolus. The protein resides in the nucleoplasm. Its subcellular location is the mitochondrion. Its function is as follows. Structure-specific nuclease with 5'-flap endonuclease and 5'-3' exonuclease activities involved in DNA replication and repair. During DNA replication, cleaves the 5'-overhanging flap structure that is generated by displacement synthesis when DNA polymerase encounters the 5'-end of a downstream Okazaki fragment. It enters the flap from the 5'-end and then tracks to cleave the flap base, leaving a nick for ligation. Also involved in the long patch base excision repair (LP-BER) pathway, by cleaving within the apurinic/apyrimidinic (AP) site-terminated flap. Acts as a genome stabilization factor that prevents flaps from equilibrating into structures that lead to duplications and deletions. Also possesses 5'-3' exonuclease activity on nicked or gapped double-stranded DNA, and exhibits RNase H activity. Also involved in replication and repair of rDNA and in repairing mitochondrial DNA. The protein is Flap endonuclease 1-A (fen1-a) of Xenopus laevis (African clawed frog).